The primary structure comprises 150 residues: MSRYAKILLLNGPNLNMLGKREPTHYGNLSLEDIEQRMQELAQQHQLELSCFQANSEEKLIDKIHQSFHLIDFIIINPAAYTHTSVALRDALLSVSIPFVEVHLSNIHRREPFRHHSYLSDIAEGVICGLGAQGYEFALQYASNYLKKIK.

Catalysis depends on Y26, which acts as the Proton acceptor. Residues N77, H83, and D90 each coordinate substrate. The Proton donor role is filled by H103. Substrate is bound by residues L104 to S105 and R114.

Belongs to the type-II 3-dehydroquinase family. In terms of assembly, homododecamer.

The catalysed reaction is 3-dehydroquinate = 3-dehydroshikimate + H2O. It functions in the pathway metabolic intermediate biosynthesis; chorismate biosynthesis; chorismate from D-erythrose 4-phosphate and phosphoenolpyruvate: step 3/7. Catalyzes a trans-dehydration via an enolate intermediate. The sequence is that of 3-dehydroquinate dehydratase from Histophilus somni (strain 129Pt) (Haemophilus somnus).